Reading from the N-terminus, the 364-residue chain is Homeobox protein Nkx-6.1 (364 aa).

A disordered region spans residues L35–S134. Composition is skewed to low complexity over residues P48–A92 and A109–S134. The segment at L101 to R268 is repressor domain. R189 is modified (asymmetric dimethylarginine). Residues R236–H295 constitute a DNA-binding region (homeobox). The tract at residues K294 to S364 is disordered. Basic and acidic residues predominate over residues K304–S317. Residues Q306 to S364 are involved in DNA-binding.

Pancreatic beta cells.

It localises to the nucleus. Functionally, together with NKX2-2 and IRX3 acts to restrict the generation of motor neurons to the appropriate region of the neural tube. Belongs to the class II proteins of neuronal progenitor factors, which are induced by SHH signals. Transcription factor which binds to specific A/T-rich DNA sequences in the promoter regions of a number of genes. Involved in transcriptional regulation in islet beta cells. Binds to the insulin promoter and is involved in regulation of the insulin gene. The polypeptide is Homeobox protein Nkx-6.1 (NKX6-1) (Mesocricetus auratus (Golden hamster)).